We begin with the raw amino-acid sequence, 400 residues long: Apolipoprotein N-acyltransferase (400 aa).

Helical transmembrane passes span 16–36, 42–62, 67–87, 97–117, and 123–143; these read AISPLLVSLLGLFSIASVLFV, FGVGFFIGMLWFYWISLGLRY, FLIPLVVIACGIFMGFVFYIG, FAFLLLLSYLTPFGFDWIVPE, and SYIGVDKLSFALSILALWILF. Positions 181–400 constitute a CN hydrolase domain; that stretch reads AQSAVSQDFD…AIITPFVSSR (220 aa). Residue glutamate 222 is the Proton acceptor of the active site. The active site involves lysine 283. Cysteine 332 functions as the Nucleophile in the catalytic mechanism. A helical transmembrane segment spans residues 377–397; it reads YGSVIFHATNLSPAAIITPFV.

Belongs to the CN hydrolase family. Apolipoprotein N-acyltransferase subfamily.

It localises to the cell inner membrane. It carries out the reaction N-terminal S-1,2-diacyl-sn-glyceryl-L-cysteinyl-[lipoprotein] + a glycerophospholipid = N-acyl-S-1,2-diacyl-sn-glyceryl-L-cysteinyl-[lipoprotein] + a 2-acyl-sn-glycero-3-phospholipid + H(+). It participates in protein modification; lipoprotein biosynthesis (N-acyl transfer). Catalyzes the phospholipid dependent N-acylation of the N-terminal cysteine of apolipoprotein, the last step in lipoprotein maturation. The chain is Apolipoprotein N-acyltransferase from Helicobacter hepaticus (strain ATCC 51449 / 3B1).